The following is a 240-amino-acid chain: uncharacterized protein (240 aa).

Residues 26 to 52 (DYVDDGESLPTRQSVKNQREQKKKQGK) form a disordered region. The chain crosses the membrane as a helical span at residues 57–77 (LFTVLAVIFVFVPVIVLVTLF). A disordered region spans residues 100-185 (KYEVVPKSED…QPAEPVQNVP (86 aa)). Over residues 103 to 159 (VVPKSEDKNDTADTKETALQKESKKEPEDSKPKEQTAADKKQTAVAEKEDSPNKEEA) the composition is skewed to basic and acidic residues. A compositionally biased stretch (low complexity) spans 160-185 (TAAAASSSQSTVQQQEQPAEPVQNVP). In terms of domain architecture, LysM spans 189–235 (VKHTVQKKETLYRISMKYYKSRTGEEKIRAYNHLNGNDVYTGQVLDI).

Its subcellular location is the membrane. This is an uncharacterized protein from Bacillus subtilis (strain 168).